The primary structure comprises 257 residues: Ribosomal RNA small subunit methyltransferase J (257 aa).

S-adenosyl-L-methionine is bound by residues 107 to 108, 123 to 124, and aspartate 177; these read RD and ER.

It belongs to the methyltransferase superfamily. RsmJ family.

Its subcellular location is the cytoplasm. The catalysed reaction is guanosine(1516) in 16S rRNA + S-adenosyl-L-methionine = N(2)-methylguanosine(1516) in 16S rRNA + S-adenosyl-L-homocysteine + H(+). Specifically methylates the guanosine in position 1516 of 16S rRNA. In Haemophilus influenzae (strain PittGG), this protein is Ribosomal RNA small subunit methyltransferase J.